The sequence spans 396 residues: Elongation factor Tu (396 aa).

One can recognise a tr-type G domain in the interval 11–205 (KPHVNIGTIG…TVDEYIPTPE (195 aa)). Residues 20-27 (GHVDHGKT) form a G1 region. Position 20 to 27 (20 to 27 (GHVDHGKT)) interacts with GTP. Position 27 (Thr27) interacts with Mg(2+). The tract at residues 61-65 (GITIN) is G2. The tract at residues 82-85 (DAPG) is G3. Residues 82 to 86 (DAPGH) and 137 to 140 (NKCD) contribute to the GTP site. The segment at 137–140 (NKCD) is G4. Residues 175-177 (SAL) form a G5 region.

The protein belongs to the TRAFAC class translation factor GTPase superfamily. Classic translation factor GTPase family. EF-Tu/EF-1A subfamily. As to quaternary structure, monomer.

It localises to the cytoplasm. The enzyme catalyses GTP + H2O = GDP + phosphate + H(+). In terms of biological role, GTP hydrolase that promotes the GTP-dependent binding of aminoacyl-tRNA to the A-site of ribosomes during protein biosynthesis. In Lactobacillus helveticus (strain DPC 4571), this protein is Elongation factor Tu.